Reading from the N-terminus, the 150-residue chain is MSASADQIQECFSIFDKDNDGKVSVEDIGACLRSLGKSPTMADIEALKTEIGAKEFDINTLKSIYKKPNIKTPQEQQKEMLDAFKALDKEGHGTIQGAELRQLLTTLGDYLSTAEVDELFKEISVDSTTGAVSYASLVNTIVSGYPLGGF.

2 consecutive EF-hand domains span residues 3-38 (ASAD…LGKS) and 75-110 (EQQK…LGDY). Residues aspartate 16, aspartate 18, aspartate 20, lysine 22, and aspartate 27 each coordinate Ca(2+).

As to quaternary structure, myosin is a hexamer of 2 heavy chains and 4 light chains (two regulatory light chains and two essential light chains).

This is Myosin, essential light chain (mlcE) from Dictyostelium discoideum (Social amoeba).